The primary structure comprises 81 residues: ATP synthase subunit c (81 aa).

Transmembrane regions (helical) follow at residues 5-25 (VAAA…IGPG) and 57-77 (LAFM…LLFA).

This sequence belongs to the ATPase C chain family. F-type ATPases have 2 components, F(1) - the catalytic core - and F(0) - the membrane proton channel. F(1) has five subunits: alpha(3), beta(3), gamma(1), delta(1), epsilon(1). F(0) has four main subunits: a(1), b(1), b'(1) and c(10-14). The alpha and beta chains form an alternating ring which encloses part of the gamma chain. F(1) is attached to F(0) by a central stalk formed by the gamma and epsilon chains, while a peripheral stalk is formed by the delta, b and b' chains.

It is found in the cellular thylakoid membrane. In terms of biological role, f(1)F(0) ATP synthase produces ATP from ADP in the presence of a proton or sodium gradient. F-type ATPases consist of two structural domains, F(1) containing the extramembraneous catalytic core and F(0) containing the membrane proton channel, linked together by a central stalk and a peripheral stalk. During catalysis, ATP synthesis in the catalytic domain of F(1) is coupled via a rotary mechanism of the central stalk subunits to proton translocation. Its function is as follows. Key component of the F(0) channel; it plays a direct role in translocation across the membrane. A homomeric c-ring of between 10-14 subunits forms the central stalk rotor element with the F(1) delta and epsilon subunits. The sequence is that of ATP synthase subunit c from Microcystis aeruginosa (strain NIES-843 / IAM M-2473).